The following is a 374-amino-acid chain: RNA binding protein fox-1 homolog 3 (374 aa).

Over residues 1-29 (MAQPYPPAQYPPPPQNGIPAEYAPPPPHP) the composition is skewed to pro residues. The interval 1–105 (MAQPYPPAQY…QQPKRLHVSN (105 aa)) is disordered. The span at 49 to 74 (TPAQTHPEQPGTEASTQPIAGTQTVP) shows a compositional bias: polar residues. The RRM domain occupies 99-175 (KRLHVSNIPF…RKIEVNNATA (77 aa)). Asymmetric dimethylarginine; alternate is present on arginine 223. At arginine 223 the chain carries Omega-N-methylarginine; alternate. Arginine 319 is modified (asymmetric dimethylarginine).

Phosphorylated. In terms of tissue distribution, widely expressed in brain, including in cerebral cortex, hippocampus, thalamus, caudate/putamen, cerebellum, as well as in the spinal cord (at protein level). Not expressed in all neuronal cells within a region, in cerebellum, expression is absent in Purkinje cells (at protein level). Expressed in the retina in the ganglion cells and some cells in the inner nuclear layer, but absent from the photoreceptor cells and most cells in the inner nuclear layer (at protein level).

It localises to the nucleus. Its subcellular location is the cytoplasm. Pre-mRNA alternative splicing regulator. Regulates alternative splicing of RBFOX2 to enhance the production of mRNA species that are targeted for nonsense-mediated decay (NMD). This Mus musculus (Mouse) protein is RNA binding protein fox-1 homolog 3 (Rbfox3).